A 303-amino-acid polypeptide reads, in one-letter code: Probable cell division protein WhiA (303 aa).

The segment at residues 272–303 (SIQQVADALEFPITKSGVNHRLRKINKIADDL) is a DNA-binding region (H-T-H motif).

Belongs to the WhiA family.

Functionally, involved in cell division and chromosome segregation. This is Probable cell division protein WhiA from Streptococcus pyogenes serotype M3 (strain ATCC BAA-595 / MGAS315).